A 228-amino-acid chain; its full sequence is ATP phosphoribosyltransferase (228 aa).

Belongs to the ATP phosphoribosyltransferase family. Short subfamily. In terms of assembly, heteromultimer composed of HisG and HisZ subunits.

Its subcellular location is the cytoplasm. The enzyme catalyses 1-(5-phospho-beta-D-ribosyl)-ATP + diphosphate = 5-phospho-alpha-D-ribose 1-diphosphate + ATP. It functions in the pathway amino-acid biosynthesis; L-histidine biosynthesis; L-histidine from 5-phospho-alpha-D-ribose 1-diphosphate: step 1/9. Its function is as follows. Catalyzes the condensation of ATP and 5-phosphoribose 1-diphosphate to form N'-(5'-phosphoribosyl)-ATP (PR-ATP). Has a crucial role in the pathway because the rate of histidine biosynthesis seems to be controlled primarily by regulation of HisG enzymatic activity. The polypeptide is ATP phosphoribosyltransferase (Acinetobacter baylyi (strain ATCC 33305 / BD413 / ADP1)).